Consider the following 68-residue polypeptide: uncharacterized protein (68 aa).

A signal peptide spans 1-21; sequence MELYREYPAWLIFLRRTYAVA.

This is an uncharacterized protein from Escherichia coli O157:H7.